Reading from the N-terminus, the 195-residue chain is 3-isopropylmalate dehydratase small subunit (195 aa).

The protein belongs to the LeuD family. LeuD type 1 subfamily. As to quaternary structure, heterodimer of LeuC and LeuD.

The enzyme catalyses (2R,3S)-3-isopropylmalate = (2S)-2-isopropylmalate. The protein operates within amino-acid biosynthesis; L-leucine biosynthesis; L-leucine from 3-methyl-2-oxobutanoate: step 2/4. Catalyzes the isomerization between 2-isopropylmalate and 3-isopropylmalate, via the formation of 2-isopropylmaleate. This Frankia alni (strain DSM 45986 / CECT 9034 / ACN14a) protein is 3-isopropylmalate dehydratase small subunit.